The chain runs to 272 residues: Phosphoglycolate phosphatase (272 aa).

Asp-19 serves as the catalytic Nucleophile. Positions 19, 21, and 182 each coordinate Mg(2+).

This sequence belongs to the HAD-like hydrolase superfamily. CbbY/CbbZ/Gph/YieH family. The cofactor is Mg(2+).

The catalysed reaction is 2-phosphoglycolate + H2O = glycolate + phosphate. It participates in organic acid metabolism; glycolate biosynthesis; glycolate from 2-phosphoglycolate: step 1/1. In terms of biological role, specifically catalyzes the dephosphorylation of 2-phosphoglycolate. Is involved in the dissimilation of the intracellular 2-phosphoglycolate formed during the DNA repair of 3'-phosphoglycolate ends, a major class of DNA lesions induced by oxidative stress. This is Phosphoglycolate phosphatase from Pseudomonas fluorescens (strain Pf0-1).